Reading from the N-terminus, the 370-residue chain is Aminomethyltransferase (370 aa).

This sequence belongs to the GcvT family. As to quaternary structure, the glycine cleavage system is composed of four proteins: P, T, L and H.

The catalysed reaction is N(6)-[(R)-S(8)-aminomethyldihydrolipoyl]-L-lysyl-[protein] + (6S)-5,6,7,8-tetrahydrofolate = N(6)-[(R)-dihydrolipoyl]-L-lysyl-[protein] + (6R)-5,10-methylene-5,6,7,8-tetrahydrofolate + NH4(+). Its function is as follows. The glycine cleavage system catalyzes the degradation of glycine. The sequence is that of Aminomethyltransferase from Clostridium botulinum (strain Kyoto / Type A2).